We begin with the raw amino-acid sequence, 345 residues long: NADH-ubiquinone oxidoreductase chain 2 (345 aa).

Transmembrane regions (helical) follow at residues 1-21 (MNPL…ILTT), 26-46 (WVSA…IISM), 60-80 (FLIQ…NAHL), 96-115 (IALT…HFWL), 122-144 (VPIL…LLIM), 148-170 (LIPT…LGGL), 201-223 (TLLN…HLTM), 242-262 (SLFL…GFIP), 274-294 (NLTP…MFYL), and 323-343 (TSTL…TPTL).

It belongs to the complex I subunit 2 family.

The protein localises to the mitochondrion inner membrane. The catalysed reaction is a ubiquinone + NADH + 5 H(+)(in) = a ubiquinol + NAD(+) + 4 H(+)(out). In terms of biological role, core subunit of the mitochondrial membrane respiratory chain NADH dehydrogenase (Complex I) that is believed to belong to the minimal assembly required for catalysis. Complex I functions in the transfer of electrons from NADH to the respiratory chain. The immediate electron acceptor for the enzyme is believed to be ubiquinone. The sequence is that of NADH-ubiquinone oxidoreductase chain 2 (MT-ND2) from Varanus nebulosus (Clouded monitor).